We begin with the raw amino-acid sequence, 600 residues long: FERM domain-containing protein 3 (600 aa).

Positions 31 to 311 (MRCTIRLLDD…ENQAFYKYAK (281 aa)) constitute an FERM domain. Positions 413-440 (SAPVLGNSPARGLETTADVTHDEEESIR) are disordered. A helical membrane pass occupies residues 534–554 (LLLAAIGLLMVVLPLLLILLE).

It is found in the membrane. This chain is FERM domain-containing protein 3 (frmd3), found in Xenopus tropicalis (Western clawed frog).